A 430-amino-acid polypeptide reads, in one-letter code: Enolase (430 aa).

Residue Gln163 participates in (2R)-2-phosphoglycerate binding. Catalysis depends on Glu205, which acts as the Proton donor. Positions 242, 287, and 314 each coordinate Mg(2+). (2R)-2-phosphoglycerate-binding residues include Lys339, Arg368, Ser369, and Lys390. The active-site Proton acceptor is Lys339.

This sequence belongs to the enolase family. Mg(2+) serves as cofactor.

Its subcellular location is the cytoplasm. The protein resides in the secreted. It localises to the cell surface. The catalysed reaction is (2R)-2-phosphoglycerate = phosphoenolpyruvate + H2O. It participates in carbohydrate degradation; glycolysis; pyruvate from D-glyceraldehyde 3-phosphate: step 4/5. Catalyzes the reversible conversion of 2-phosphoglycerate (2-PG) into phosphoenolpyruvate (PEP). It is essential for the degradation of carbohydrates via glycolysis. The protein is Enolase of Bacillus velezensis (strain DSM 23117 / BGSC 10A6 / LMG 26770 / FZB42) (Bacillus amyloliquefaciens subsp. plantarum).